Reading from the N-terminus, the 297-residue chain is Bilin biosynthesis protein MpeU (297 aa).

The protein belongs to the CpcE/RpcE/PecE family.

Its function is as follows. An enzyme involved in the biosynthesis of bilin. The protein is Bilin biosynthesis protein MpeU (mpeU) of Synechococcus sp. (strain WH8020).